Here is a 161-residue protein sequence, read N- to C-terminus: Large ribosomal subunit protein uL15 (161 aa).

A disordered region spans residues 1–44 (MKLSEIADNAGSRKKRMRVGRGIGSGKGKTAGRGGKGQTARSGV). Positions 21–37 (RGIGSGKGKTAGRGGKG) are enriched in gly residues.

Belongs to the universal ribosomal protein uL15 family. As to quaternary structure, part of the 50S ribosomal subunit.

Binds to the 23S rRNA. This is Large ribosomal subunit protein uL15 from Rhodopseudomonas palustris (strain BisA53).